Here is a 240-residue protein sequence, read N- to C-terminus: Serine protease SplB (240 aa).

A signal peptide spans 1–36; it reads MNKNVVIKSLAALTILTSVTGIGITLVEEVQQTAKA. Residues His-75, Asp-113, and Ser-193 each act as charge relay system in the active site.

It belongs to the peptidase S1B family.

The protein localises to the secreted. In terms of biological role, serine protease that cleaves specifically after the sequence Trp-Glu-Leu-Gln. The polypeptide is Serine protease SplB (splB) (Staphylococcus aureus (strain MW2)).